We begin with the raw amino-acid sequence, 230 residues long: MSQRAPIVTIDGPSGAGKGTISQILASRLGWKLLDSGAIYRVLALAAIHHNVELDNEASLALLAAHLDVQFITANGNGIKVVLEGEDVSHAIRSQECSNAASKVAAFPRVREALLRRQRAFAEAPGLIADGRDMGTVVFPTSPAKLYLTASAEERAQRRYNQLQDKGFDVNIDRLLAEVVERDERDMNRPVAPLVPAEDALVIDTTGIGIDEVVELALSHIKEKLPDLVL.

12–20 lines the ATP pocket; it reads GPSGAGKGT.

Belongs to the cytidylate kinase family. Type 1 subfamily.

The protein resides in the cytoplasm. The catalysed reaction is CMP + ATP = CDP + ADP. The enzyme catalyses dCMP + ATP = dCDP + ADP. The sequence is that of Cytidylate kinase from Shewanella loihica (strain ATCC BAA-1088 / PV-4).